Consider the following 89-residue polypeptide: Large ribosomal subunit protein bL27 (89 aa).

This sequence belongs to the bacterial ribosomal protein bL27 family.

The chain is Large ribosomal subunit protein bL27 from Bacteroides fragilis (strain ATCC 25285 / DSM 2151 / CCUG 4856 / JCM 11019 / LMG 10263 / NCTC 9343 / Onslow / VPI 2553 / EN-2).